A 483-amino-acid chain; its full sequence is Argininosuccinate lyase (483 aa).

Belongs to the lyase 1 family. Argininosuccinate lyase subfamily.

It localises to the cytoplasm. It carries out the reaction 2-(N(omega)-L-arginino)succinate = fumarate + L-arginine. Its pathway is amino-acid biosynthesis; L-arginine biosynthesis; L-arginine from L-ornithine and carbamoyl phosphate: step 3/3. This chain is Argininosuccinate lyase, found in Archaeoglobus fulgidus (strain ATCC 49558 / DSM 4304 / JCM 9628 / NBRC 100126 / VC-16).